The following is a 362-amino-acid chain: Glutamate 5-kinase (362 aa).

Residue lysine 3 participates in ATP binding. Residues serine 43, aspartate 128, and asparagine 140 each coordinate substrate. Residues 160-161 (TD) and 202-208 (TGGMRTK) contribute to the ATP site. A PUA domain is found at 267-348 (PGTILIDAGA…REIEPILGYS (82 aa)).

This sequence belongs to the glutamate 5-kinase family.

It is found in the cytoplasm. It carries out the reaction L-glutamate + ATP = L-glutamyl 5-phosphate + ADP. It participates in amino-acid biosynthesis; L-proline biosynthesis; L-glutamate 5-semialdehyde from L-glutamate: step 1/2. Its function is as follows. Catalyzes the transfer of a phosphate group to glutamate to form L-glutamate 5-phosphate. The polypeptide is Glutamate 5-kinase (Xanthomonas campestris pv. campestris (strain 8004)).